The sequence spans 612 residues: Sulfite reductase [NADPH] flavoprotein alpha-component (612 aa).

Residues Val-64–Val-202 form the Flavodoxin-like domain. Residues Ser-70 to Ala-75, Ser-117 to Gly-120, and Leu-153 to Cys-162 each bind FMN. The FAD-binding FR-type domain occupies Thr-247–Pro-461. FAD is bound by residues Thr-335, Lys-369, Arg-399–Ser-402, Thr-417–Gly-419, Tyr-423, and Gly-432–Ser-435. NADP(+) is bound by residues Ser-532–Arg-533, Lys-538–Gln-542, and Asp-574. Tyr-612 provides a ligand contact to FAD.

It belongs to the NADPH-dependent sulphite reductase flavoprotein subunit CysJ family. This sequence in the N-terminal section; belongs to the flavodoxin family. In the C-terminal section; belongs to the flavoprotein pyridine nucleotide cytochrome reductase family. As to quaternary structure, alpha(8)-beta(8). The alpha component is a flavoprotein, the beta component is a hemoprotein. FAD is required as a cofactor. The cofactor is FMN.

The catalysed reaction is hydrogen sulfide + 3 NADP(+) + 3 H2O = sulfite + 3 NADPH + 4 H(+). It functions in the pathway sulfur metabolism; hydrogen sulfide biosynthesis; hydrogen sulfide from sulfite (NADPH route): step 1/1. Functionally, component of the sulfite reductase complex that catalyzes the 6-electron reduction of sulfite to sulfide. This is one of several activities required for the biosynthesis of L-cysteine from sulfate. The flavoprotein component catalyzes the electron flow from NADPH -&gt; FAD -&gt; FMN to the hemoprotein component. The polypeptide is Sulfite reductase [NADPH] flavoprotein alpha-component (Yersinia pseudotuberculosis serotype O:1b (strain IP 31758)).